The sequence spans 377 residues: Lipoyl synthase, mitochondrial (377 aa).

Residues cysteine 103, cysteine 108, cysteine 114, cysteine 134, cysteine 138, cysteine 141, and serine 349 each coordinate [4Fe-4S] cluster. The Radical SAM core domain occupies 119 to 338; that stretch reads EHGTQTATIM…EERGNELGFL (220 aa).

Belongs to the radical SAM superfamily. Lipoyl synthase family. The cofactor is [4Fe-4S] cluster.

It localises to the mitochondrion. It catalyses the reaction [[Fe-S] cluster scaffold protein carrying a second [4Fe-4S](2+) cluster] + N(6)-octanoyl-L-lysyl-[protein] + 2 oxidized [2Fe-2S]-[ferredoxin] + 2 S-adenosyl-L-methionine + 4 H(+) = [[Fe-S] cluster scaffold protein] + N(6)-[(R)-dihydrolipoyl]-L-lysyl-[protein] + 4 Fe(3+) + 2 hydrogen sulfide + 2 5'-deoxyadenosine + 2 L-methionine + 2 reduced [2Fe-2S]-[ferredoxin]. Its pathway is protein modification; protein lipoylation via endogenous pathway; protein N(6)-(lipoyl)lysine from octanoyl-[acyl-carrier-protein]: step 2/2. In terms of biological role, catalyzes the radical-mediated insertion of two sulfur atoms into the C-6 and C-8 positions of the octanoyl moiety bound to the lipoyl domains of lipoate-dependent enzymes, thereby converting the octanoylated domains into lipoylated derivatives. The protein is Lipoyl synthase, mitochondrial of Drosophila sechellia (Fruit fly).